Consider the following 198-residue polypeptide: FMN-dependent NADH:quinone oxidoreductase 6 (198 aa).

96 to 99 (MYNF) serves as a coordination point for FMN.

This sequence belongs to the azoreductase type 1 family. As to quaternary structure, homodimer. It depends on FMN as a cofactor.

It catalyses the reaction 2 a quinone + NADH + H(+) = 2 a 1,4-benzosemiquinone + NAD(+). It carries out the reaction N,N-dimethyl-1,4-phenylenediamine + anthranilate + 2 NAD(+) = 2-(4-dimethylaminophenyl)diazenylbenzoate + 2 NADH + 2 H(+). Functionally, quinone reductase that provides resistance to thiol-specific stress caused by electrophilic quinones. In terms of biological role, also exhibits azoreductase activity. Catalyzes the reductive cleavage of the azo bond in aromatic azo compounds to the corresponding amines. In Burkholderia lata (strain ATCC 17760 / DSM 23089 / LMG 22485 / NCIMB 9086 / R18194 / 383), this protein is FMN-dependent NADH:quinone oxidoreductase 6.